A 182-amino-acid polypeptide reads, in one-letter code: UPF0149 protein HI_0817 (182 aa).

Belongs to the UPF0149 family.

In Haemophilus influenzae (strain ATCC 51907 / DSM 11121 / KW20 / Rd), this protein is UPF0149 protein HI_0817.